Reading from the N-terminus, the 404-residue chain is Glucose-1-phosphate adenylyltransferase (404 aa).

Alpha-D-glucose 1-phosphate is bound by residues Tyr99, Gly164, 179 to 180 (EK), and Ser197.

It belongs to the bacterial/plant glucose-1-phosphate adenylyltransferase family. Homotetramer.

It catalyses the reaction alpha-D-glucose 1-phosphate + ATP + H(+) = ADP-alpha-D-glucose + diphosphate. It functions in the pathway glycan biosynthesis; glycogen biosynthesis. Involved in the biosynthesis of ADP-glucose, a building block required for the elongation reactions to produce glycogen. Catalyzes the reaction between ATP and alpha-D-glucose 1-phosphate (G1P) to produce pyrophosphate and ADP-Glc. The chain is Glucose-1-phosphate adenylyltransferase from Nocardia farcinica (strain IFM 10152).